The chain runs to 151 residues: Acidic phospholipase A2 2 (151 aa).

Residues 1–27 (MYPAHLLVLLAVCVSLLGAASIPARPL) form the signal peptide. Intrachain disulfides connect cysteine 38–cysteine 104, cysteine 54–cysteine 151, cysteine 56–cysteine 72, cysteine 71–cysteine 132, cysteine 78–cysteine 125, cysteine 88–cysteine 118, and cysteine 111–cysteine 123. Tyrosine 55, glycine 57, and glycine 59 together coordinate Ca(2+). Histidine 75 is a catalytic residue. Aspartate 76 is a binding site for Ca(2+). Aspartate 126 is an active-site residue.

This sequence belongs to the phospholipase A2 family. Group I subfamily. D49 sub-subfamily. It depends on Ca(2+) as a cofactor. In terms of tissue distribution, expressed by the venom gland.

Its subcellular location is the secreted. The enzyme catalyses a 1,2-diacyl-sn-glycero-3-phosphocholine + H2O = a 1-acyl-sn-glycero-3-phosphocholine + a fatty acid + H(+). PLA2 catalyzes the calcium-dependent hydrolysis of the 2-acyl groups in 3-sn-phosphoglycerides. This is Acidic phospholipase A2 2 from Tropidechis carinatus (Australian rough-scaled snake).